Here is a 389-residue protein sequence, read N- to C-terminus: Leucine aminopeptidase 1 (389 aa).

The N-terminal stretch at 1 to 19 (MKLPALLTLGVAASTMVLA) is a signal peptide. The propeptide occupies 20–88 (AIAPDQVPLN…LPKVFPTPAV (69 aa)). N-linked (GlcNAc...) asparagine glycans are attached at residues N96, N119, N149, N164, and N181. Residues H189 and D208 each coordinate Zn(2+). N-linked (GlcNAc...) asparagine glycosylation occurs at N233. The Zn(2+) site is built by E247 and D274. C323 and C327 are oxidised to a cystine. H356 is a binding site for Zn(2+).

This sequence belongs to the peptidase M28 family. M28E subfamily. Monomer. It depends on Zn(2+) as a cofactor.

It is found in the secreted. In terms of biological role, extracellular aminopeptidase that allows assimilation of proteinaceous substrates. In Paracoccidioides brasiliensis (strain Pb18), this protein is Leucine aminopeptidase 1 (LAP1).